Consider the following 133-residue polypeptide: Exosome complex protein C1739.07 (133 aa).

Residues 96–133 (VNPKTEAVNTSNAAISSSSSNRPKVAKDAATRIIKHHT) form a disordered region. Residues 102–116 (AVNTSNAAISSSSSN) show a composition bias toward low complexity.

This sequence belongs to the C1D family. As to quaternary structure, component of the exosome multienzyme ribonuclease complex. Interacts with cut3.

It localises to the cytoplasm. Its subcellular location is the nucleus. Its function is as follows. Required for exosome-dependent processing of pre-rRNA and small nucleolar RNA (snRNA) precursors. Involved in processing of 35S pre-rRNA at the A0, A1 and A2 sites. The polypeptide is Exosome complex protein C1739.07 (Schizosaccharomyces pombe (strain 972 / ATCC 24843) (Fission yeast)).